The following is a 150-amino-acid chain: Putative pre-16S rRNA nuclease (150 aa).

This sequence belongs to the YqgF nuclease family.

The protein localises to the cytoplasm. Its function is as follows. Could be a nuclease involved in processing of the 5'-end of pre-16S rRNA. The chain is Putative pre-16S rRNA nuclease from Protochlamydia amoebophila (strain UWE25).